A 54-amino-acid polypeptide reads, in one-letter code: Metallothionein-2 (54 aa).

This sequence belongs to the metallothionein superfamily. Type 11 family.

The protein is Metallothionein-2 (MTP2) of Yarrowia lipolytica (strain CLIB 122 / E 150) (Yeast).